The chain runs to 240 residues: T-cell antigen CD7 (240 aa).

An N-terminal signal peptide occupies residues 1–25 (MAGPPRLLLLPLLLALARGLPGALA). In terms of domain architecture, Ig-like spans 26–130 (AQEVQQSPHC…NVYGSGTLVL (105 aa)). Topologically, residues 26–180 (AQEVQQSPHC…PDPPAASALP (155 aa)) are extracellular. 2 cysteine pairs are disulfide-bonded: Cys35/Cys142 and Cys48/Cys114. 2 N-linked (GlcNAc...) asparagine glycosylation sites follow: Asn45 and Asn96. Residues 140 to 172 (HRCSDAPPRASALPAPPTGSALPDPQTASALPD) are disordered. Tandem repeats lie at residues 145-153 (APPRASALP), 154-162 (APPTGSALP), 163-171 (DPQTASALP), and 172-180 (DPPAASALP). The interval 145–180 (APPRASALPAPPTGSALPDPQTASALPDPPAASALP) is 4 X 9 AA tandem repeats, potential spacer function. Residues 181–201 (AALAVISFLLGLGLGVACVLA) form a helical membrane-spanning segment. Cys198 carries S-palmitoyl cysteine lipidation. Topologically, residues 202–240 (RTQIKKLCSWRDKNSAACVVYEDMSHSRCNTLSSPNQYQ) are cytoplasmic.

In terms of assembly, interacts with SECTM1. As to expression, expressed on T-cells and natural killer (NK) cells and their precursors.

The protein resides in the membrane. Transmembrane glycoprotein expressed by T-cells and natural killer (NK) cells and their precursors. Plays a costimulatory role in T-cell activation upon binding to its ligand K12/SECTM1. In turn, mediates the production of cytokines such as IL-2. On resting NK-cells, CD7 activation results in a significant induction of interferon-gamma levels. In Homo sapiens (Human), this protein is T-cell antigen CD7 (CD7).